Reading from the N-terminus, the 498-residue chain is L-ornithine N(5)-monooxygenase (498 aa).

Residues 80–88 (ERQKQFAWH) and glutamine 99 each bind FAD. Position 104 (lysine 104) interacts with substrate. Valine 165 is an FAD binding site. NADP(+) contacts are provided by residues 251–254 (SGQS) and arginine 276. Substrate-binding positions include 290 to 293 (NEVF) and asparagine 320. 320–322 (NYS) lines the NADP(+) pocket. 463–465 (SLL) provides a ligand contact to FAD. Residue serine 466 coordinates substrate.

This sequence belongs to the lysine N(6)-hydroxylase/L-ornithine N(5)-oxygenase family. As to quaternary structure, homotetramer. Requires FAD as cofactor.

It carries out the reaction L-ornithine + NADPH + O2 = N(5)-hydroxy-L-ornithine + NADP(+) + H2O. The catalysed reaction is L-ornithine + NADH + O2 = N(5)-hydroxy-L-ornithine + NAD(+) + H2O. The protein operates within siderophore biosynthesis. Catalyzes the conversion of L-ornithine to N(5)-hydroxyornithine, the first step in the biosynthesis of all hydroxamate-containing siderophores, such as the secreted triacetylfusarinine C (TAFC) involved in iron uptake and the intracellular iron storage compound desferriferricrocin (DFFC). This Emericella nidulans (strain FGSC A4 / ATCC 38163 / CBS 112.46 / NRRL 194 / M139) (Aspergillus nidulans) protein is L-ornithine N(5)-monooxygenase.